The following is a 221-amino-acid chain: MFKAVLFDLDGVITDTAEYHFRAWKALAEEIGINGVDRQFNEQLKGVSREDSLQKILDLADKKVSAEEFKELAKRKNDNYVKMIQDVSPADVYPGILQLLKDLRSNKIKIALASASKNGPFLLEKMNLTGYFDAIADPAEVAASKPAPDIFIAAAHAVGVAPSESIGLEDSQAGIQAIKDSGALPIGVGRPEDLGDDIVIVPDTSYYTLEFLKEVWLQKQK.

Asp-8 functions as the Nucleophile in the catalytic mechanism. Mg(2+)-binding residues include Asp-8 and Asp-10. Asp-8 carries the 4-aspartylphosphate modification. Asp-10 functions as the Proton donor/acceptor in the catalytic mechanism. The beta-D-glucose 6-phosphate site is built by Asp-10, Gly-46, Val-47, Arg-49, Ser-116, Lys-117, and Asn-118. Asp-170 is a Mg(2+) binding site.

Belongs to the HAD-like hydrolase superfamily. CbbY/CbbZ/Gph/YieH family. Monomer. The cofactor is Mg(2+). Autophosphorylated.

It is found in the cytoplasm. It carries out the reaction beta-D-glucose 1-phosphate = beta-D-glucose 6-phosphate. Activated by phosphorylation. Competitively inhibited by alpha-D-galactose-1-phosphate. Functionally, catalyzes the interconversion of D-glucose 1-phosphate (G1P) and D-glucose 6-phosphate (G6P), forming beta-D-glucose 1,6-(bis)phosphate (beta-G16P) as an intermediate. The beta-phosphoglucomutase (Beta-PGM) acts on the beta-C(1) anomer of G1P. Glucose or lactose are used in preference to maltose, which is only utilized after glucose or lactose has been exhausted. It plays a key role in the regulation of the flow of carbohydrate intermediates in glycolysis and the formation of the sugar nucleotide UDP-glucose. The protein is Beta-phosphoglucomutase of Lactococcus lactis subsp. lactis (strain IL1403) (Streptococcus lactis).